The chain runs to 33 residues: Photosystem II reaction center protein Psb30 (33 aa).

The helical transmembrane segment at 5–25 (VIAQLTVLTLMVVSGPLVIVL) threads the bilayer.

It belongs to the Psb30/Ycf12 family. As to quaternary structure, PSII is composed of 1 copy each of membrane proteins PsbA, PsbB, PsbC, PsbD, PsbE, PsbF, PsbH, PsbI, PsbJ, PsbK, PsbL, PsbM, PsbT, PsbX, PsbY, PsbZ, Psb30/Ycf12, peripheral proteins of the oxygen-evolving complex and a large number of cofactors. It forms dimeric complexes.

The protein localises to the plastid. It localises to the chloroplast thylakoid membrane. Its function is as follows. A core subunit of photosystem II (PSII), probably helps stabilize the reaction center. The chain is Photosystem II reaction center protein Psb30 from Pinus koraiensis (Korean pine).